A 397-amino-acid chain; its full sequence is Pectate lyase (397 aa).

The signal sequence occupies residues 1–25 (MDVYRIRISVFFLLVLLTFAALTTA). Asparagine 134 carries N-linked (GlcNAc...) asparagine glycosylation. Ca(2+) contacts are provided by aspartate 191, aspartate 216, and aspartate 220. An N-linked (GlcNAc...) asparagine glycan is attached at asparagine 227. Arginine 272 is an active-site residue.

This sequence belongs to the polysaccharide lyase 1 family. Ca(2+) serves as cofactor.

It catalyses the reaction Eliminative cleavage of (1-&gt;4)-alpha-D-galacturonan to give oligosaccharides with 4-deoxy-alpha-D-galact-4-enuronosyl groups at their non-reducing ends.. It participates in glycan metabolism; pectin degradation; 2-dehydro-3-deoxy-D-gluconate from pectin: step 2/5. The polypeptide is Pectate lyase (Nicotiana tabacum (Common tobacco)).